The primary structure comprises 282 residues: Formamidopyrimidine-DNA glycosylase (282 aa).

The active-site Schiff-base intermediate with DNA is proline 2. The Proton donor role is filled by glutamate 3. The active-site Proton donor; for beta-elimination activity is the lysine 61. Histidine 93, arginine 112, and lysine 158 together coordinate DNA. An FPG-type zinc finger spans residues aspartate 244–proline 278. Arginine 268 (proton donor; for delta-elimination activity) is an active-site residue.

The protein belongs to the FPG family. Monomer. The cofactor is Zn(2+).

It carries out the reaction Hydrolysis of DNA containing ring-opened 7-methylguanine residues, releasing 2,6-diamino-4-hydroxy-5-(N-methyl)formamidopyrimidine.. It catalyses the reaction 2'-deoxyribonucleotide-(2'-deoxyribose 5'-phosphate)-2'-deoxyribonucleotide-DNA = a 3'-end 2'-deoxyribonucleotide-(2,3-dehydro-2,3-deoxyribose 5'-phosphate)-DNA + a 5'-end 5'-phospho-2'-deoxyribonucleoside-DNA + H(+). Its function is as follows. Involved in base excision repair of DNA damaged by oxidation or by mutagenic agents. Acts as a DNA glycosylase that recognizes and removes damaged bases. Has a preference for oxidized purines, such as 7,8-dihydro-8-oxoguanine (8-oxoG). Has AP (apurinic/apyrimidinic) lyase activity and introduces nicks in the DNA strand. Cleaves the DNA backbone by beta-delta elimination to generate a single-strand break at the site of the removed base with both 3'- and 5'-phosphates. This chain is Formamidopyrimidine-DNA glycosylase, found in Mycobacterium leprae (strain Br4923).